We begin with the raw amino-acid sequence, 618 residues long: Proline--tRNA ligase (618 aa).

This sequence belongs to the class-II aminoacyl-tRNA synthetase family. ProS type 1 subfamily. Homodimer.

It localises to the cytoplasm. The enzyme catalyses tRNA(Pro) + L-proline + ATP = L-prolyl-tRNA(Pro) + AMP + diphosphate. In terms of biological role, catalyzes the attachment of proline to tRNA(Pro) in a two-step reaction: proline is first activated by ATP to form Pro-AMP and then transferred to the acceptor end of tRNA(Pro). As ProRS can inadvertently accommodate and process non-cognate amino acids such as alanine and cysteine, to avoid such errors it has two additional distinct editing activities against alanine. One activity is designated as 'pretransfer' editing and involves the tRNA(Pro)-independent hydrolysis of activated Ala-AMP. The other activity is designated 'posttransfer' editing and involves deacylation of mischarged Ala-tRNA(Pro). The misacylated Cys-tRNA(Pro) is not edited by ProRS. This Streptococcus equi subsp. zooepidemicus (strain H70) protein is Proline--tRNA ligase.